The chain runs to 70 residues: Small ribosomal subunit protein bS21 (70 aa).

Basic residues predominate over residues 48-61; it reads KLAAAVKRQSKRLR. A disordered region spans residues 48-70; the sequence is KLAAAVKRQSKRLRSQQLPPKMY.

It belongs to the bacterial ribosomal protein bS21 family.

The polypeptide is Small ribosomal subunit protein bS21 (Thiobacillus denitrificans (strain ATCC 25259 / T1)).